We begin with the raw amino-acid sequence, 303 residues long: Probable 5-dehydro-4-deoxyglucarate dehydratase (303 aa).

This sequence belongs to the DapA family.

The enzyme catalyses 5-dehydro-4-deoxy-D-glucarate + H(+) = 2,5-dioxopentanoate + CO2 + H2O. It participates in carbohydrate acid metabolism; D-glucarate degradation; 2,5-dioxopentanoate from D-glucarate: step 2/2. The chain is Probable 5-dehydro-4-deoxyglucarate dehydratase from Polaromonas naphthalenivorans (strain CJ2).